Consider the following 407-residue polypeptide: 1-deoxy-D-xylulose 5-phosphate reductoisomerase (407 aa).

The NADPH site is built by T25, G26, S27, I28, N53, and N136. K137 provides a ligand contact to 1-deoxy-D-xylulose 5-phosphate. E138 is a binding site for NADPH. A Mn(2+)-binding site is contributed by D162. 4 residues coordinate 1-deoxy-D-xylulose 5-phosphate: S163, E164, S188, and H211. Mn(2+) is bound at residue E164. G217 is an NADPH binding site. Residues S224, N229, K230, and E233 each coordinate 1-deoxy-D-xylulose 5-phosphate. E233 provides a ligand contact to Mn(2+).

This sequence belongs to the DXR family. Requires Mg(2+) as cofactor. Mn(2+) serves as cofactor.

It catalyses the reaction 2-C-methyl-D-erythritol 4-phosphate + NADP(+) = 1-deoxy-D-xylulose 5-phosphate + NADPH + H(+). The protein operates within isoprenoid biosynthesis; isopentenyl diphosphate biosynthesis via DXP pathway; isopentenyl diphosphate from 1-deoxy-D-xylulose 5-phosphate: step 1/6. In terms of biological role, catalyzes the NADPH-dependent rearrangement and reduction of 1-deoxy-D-xylulose-5-phosphate (DXP) to 2-C-methyl-D-erythritol 4-phosphate (MEP). The protein is 1-deoxy-D-xylulose 5-phosphate reductoisomerase of Nitrobacter hamburgensis (strain DSM 10229 / NCIMB 13809 / X14).